A 353-amino-acid chain; its full sequence is UDP-3-O-acylglucosamine N-acyltransferase (353 aa).

The active-site Proton acceptor is the histidine 242.

Belongs to the transferase hexapeptide repeat family. LpxD subfamily. As to quaternary structure, homotrimer.

It carries out the reaction a UDP-3-O-[(3R)-3-hydroxyacyl]-alpha-D-glucosamine + a (3R)-hydroxyacyl-[ACP] = a UDP-2-N,3-O-bis[(3R)-3-hydroxyacyl]-alpha-D-glucosamine + holo-[ACP] + H(+). It functions in the pathway bacterial outer membrane biogenesis; LPS lipid A biosynthesis. Catalyzes the N-acylation of UDP-3-O-acylglucosamine using 3-hydroxyacyl-ACP as the acyl donor. Is involved in the biosynthesis of lipid A, a phosphorylated glycolipid that anchors the lipopolysaccharide to the outer membrane of the cell. This Pseudomonas aeruginosa (strain LESB58) protein is UDP-3-O-acylglucosamine N-acyltransferase.